The chain runs to 61 residues: Small ribosomal subunit protein uS14 (61 aa).

The Zn(2+) site is built by Cys-24, Cys-27, Cys-40, and Cys-43.

Belongs to the universal ribosomal protein uS14 family. Zinc-binding uS14 subfamily. As to quaternary structure, part of the 30S ribosomal subunit. Contacts proteins S3 and S10. It depends on Zn(2+) as a cofactor.

Binds 16S rRNA, required for the assembly of 30S particles and may also be responsible for determining the conformation of the 16S rRNA at the A site. This chain is Small ribosomal subunit protein uS14, found in Acetivibrio thermocellus (strain ATCC 27405 / DSM 1237 / JCM 9322 / NBRC 103400 / NCIMB 10682 / NRRL B-4536 / VPI 7372) (Clostridium thermocellum).